The sequence spans 396 residues: MNKGENMNLEMWVQNISATFPWYAQLLRDKQADLSRLESLPLITEELLTQHYYHAENSFPGEHHSYLTSGTTSGKRKRIFYSDNDQRIYLQQRMDIIRDFCGEGHTRACADLGTGHAAATAGEIFQAMGCDVELIDFTRPIEQHIEVLNRFKPDIFFTMPMILDSLIATGKLDFQPKRIILLGDVASLNWQNKVADYFHIQPAQVLDLFGSIEIGSIAFYNHAQKRYQFDSYVRPEVVPVQSLYPGAKYGGDGGILLLTSFAREYFPAVRFVTNDLIEGFAQENVGGRTVYTYQRCLGRFAGEFKHGEKINLSDISDALANNLPYHKYDLADHEGGLVIRIAAKSIPTEVIEAIKHDLLARNPDIAQMISSGLVGDIRIQCVDAQEITGNVSKRRY.

It carries out the reaction (S)-2,3-diaminopropanoate + fumarate + ATP = N(3)-fumaroyl-(S)-2,3-diaminopropanoate + AMP + diphosphate. It functions in the pathway antibiotic biosynthesis. Functionally, involved in dapdiamide antibiotics biosynthesis. Ligates fumarate and 2,3-diaminopropionate (DAP) to form N-beta-fumaroyl-DAP. Can also form N-succinoyl-DAP from succinate and DAP, with lower efficiency. The chain is Fumarate--(S)-2,3-diaminopropanoate ligase from Enterobacter agglomerans (Erwinia herbicola).